We begin with the raw amino-acid sequence, 591 residues long: MTQGKIIKVSGPLVIASGMQEANIQDICRVGKLGLIGEIIEMRRDQASIQVYEETSGLGPGEPVVTTGEPLSVELGPGLISQMFDGIQRPLDRFKLATHNDFLVRGVEVPSLDRDIKWHFDSTISIGQKVSTGDILGTVKETEVVNHKIMVPYGISGEVVSIASGDFTIDEVVYEIKKLDGSFYKGTLMQKWPVRKARPVSKRLIPEEPLITGQRVIDTFFPVTKGGAAAVPGPFGAGKTVVQHQVAKFANVDIVIYVGCGERGNEMTDVLNEFPELIDPNTGQSIMQRTVLIANTSNMPVAAREASIYTGITMAEYFRDMGYSVAIMADSTSRWAEALREMSGRLEEMPGDEGYPAYLGSRIAEYYERAGRSQALGLPEREGTITAIGAVSPPGGDISEPVTQNTLRIVKVFWGLDAPLAQRRHFPAINWLTSYSLYKDSVGTYIDDKEKTDWNSKITRAMNYLQRESSLEEIVRLVGIDSLSENERLTMEIAKQIREDYLQQNAFDSVDTFTSFAKQEAMLSNILTFADQANHALELGSYFTEIIEGTVAVRDRMARSKYVSEDRLDEIKIISNEITHQIQLILETGGL.

233–240 (GPFGAGKT) is a binding site for ATP.

This sequence belongs to the ATPase alpha/beta chains family.

It catalyses the reaction ATP + H2O + 4 H(+)(in) = ADP + phosphate + 5 H(+)(out). Produces ATP from ADP in the presence of a proton gradient across the membrane. The V-type alpha chain is a catalytic subunit. This chain is V-type ATP synthase alpha chain, found in Streptococcus pneumoniae (strain Hungary19A-6).